The primary structure comprises 208 residues: Cytochrome c oxidase assembly protein CtaG (208 aa).

Topologically, residues 1–19 (MSPPLPQAPQQPAPRRGLG) are cytoplasmic. The helical; Signal-anchor for type II membrane protein transmembrane segment at 20–42 (HDTAVAAVCGLVVALMVGASFAA) threads the bilayer. Residues 43–208 (VPFYNWFCRT…SEPAPRKGNL (166 aa)) lie on the Periplasmic side of the membrane.

This sequence belongs to the COX11/CtaG family.

It localises to the cell inner membrane. In terms of biological role, exerts its effect at some terminal stage of cytochrome c oxidase synthesis, probably by being involved in the insertion of the copper B into subunit I. The chain is Cytochrome c oxidase assembly protein CtaG from Rhodopseudomonas palustris (strain TIE-1).